The following is a 425-amino-acid chain: CBS domain-containing protein CBSX6 (425 aa).

One can recognise a CBS 1 domain in the interval 16-90 (GKPEMVEFYE…FLAKTECLQE (75 aa)). The span at 159–172 (SENSSSSSGLSADS) shows a compositional bias: low complexity. Positions 159–182 (SENSSSSSGLSADSTNRPTTSMTS) are disordered. Residues 173 to 182 (TNRPTTSMTS) show a composition bias toward polar residues. A run of 2 helical transmembrane segments spans residues 200 to 220 (IGVLGALAPLPLTSISTLGII) and 275 to 295 (YLAAAWALANLYAGQFVMGVE). The region spanning 347–409 (MYRGRSAPLT…TAVTKQPSAF (63 aa)) is the CBS 2 domain.

Its subcellular location is the vacuole membrane. In Arabidopsis thaliana (Mouse-ear cress), this protein is CBS domain-containing protein CBSX6 (CBSX6).